Reading from the N-terminus, the 1800-residue chain is U3 small nucleolar RNA-associated protein 10 (1800 aa).

HEAT repeat units lie at residues 426–467 and 581–619; these read FTQS…TTPA and DVDL…LYKK. 2 helical membrane passes run 944 to 964 and 1000 to 1020; these read IQSG…AIVN and ALLL…HSVM. HEAT repeat units follow at residues 1043-1081, 1250-1288, 1294-1333, and 1755-1793; these read DQTI…AFEH, TLSL…QNPE, QHRM…KYGR, and LALL…VLGE.

It belongs to the HEATR1/UTP10 family. As to quaternary structure, component of the ribosomal small subunit (SSU) processome.

The protein resides in the nucleus. It localises to the nucleolus. The protein localises to the membrane. Its function is as follows. Involved in nucleolar processing of pre-18S ribosomal RNA. Involved in ribosome biosynthesis. This Aspergillus niger (strain ATCC MYA-4892 / CBS 513.88 / FGSC A1513) protein is U3 small nucleolar RNA-associated protein 10.